A 667-amino-acid polypeptide reads, in one-letter code: Gamma-tubulin complex component 4 (667 aa).

The tract at residues 425 to 445 (HKADATQAREGPSRETSPREA) is disordered.

This sequence belongs to the TUBGCP family. As to quaternary structure, component of the gamma-tubulin ring complex (gTuRC) consisting of TUBGCP2, TUBGCP3, TUBGCP4, TUBGCP5 and TUBGCP6 and gamma-tubulin TUBG1 or TUBG2. TUBGCP2, TUBGCP3, TUBGCP4, TUBGCP5 and TUBGCP6 assemble in a 5:5:2:1:1 stoichiometry; each is associated with a gamma-tubulin, thereby arranging 14 gamma-tubulins in a helical manner. Gamma-tubulin at the first position is blocked by TUBGCP3 at the last position, allowing 13 protafilaments to grow into a microtubule. The gTuRC (via TUBGCP3 and TUBGCP6) interacts with ACTB and MZT1; the interactions form a luminal bridge that stabilizes the initial structure during complex assembly. The gTuRC (via TUBGCP2) interacts with MZT2A/MZT2B and CDK5RAP2 (via CM1 motif); the interactions play a role in gTuRC activation. Interacts with NINL. Interacts with ATF5; the ATF5:PCNT:polyglutamylated tubulin (PGT) tripartite unites the mother centriole and the pericentriolar material (PCM) in the centrosome. Ubiquitously expressed.

The protein resides in the cytoplasm. It is found in the cytoskeleton. Its subcellular location is the microtubule organizing center. The protein localises to the centrosome. In terms of biological role, component of the gamma-tubulin ring complex (gTuRC) which mediates microtubule nucleation. The gTuRC regulates the minus-end nucleation of alpha-beta tubulin heterodimers that grow into microtubule protafilaments, a critical step in centrosome duplication and spindle formation. In Homo sapiens (Human), this protein is Gamma-tubulin complex component 4 (TUBGCP4).